A 126-amino-acid chain; its full sequence is Fatty acid-binding protein, liver (126 aa).

Ala2 bears the N-acetylalanine mark. Cholate-binding residues include Arg56, Gln57, Lys77, His99, and Gln101.

The protein belongs to the calycin superfamily. Fatty-acid binding protein (FABP) family.

It localises to the cytoplasm. In terms of biological role, binds free fatty acids and their coenzyme A derivatives, bilirubin, and some other small molecules in the cytoplasm. May be involved in intracellular lipid transport. Binds 2 molecules of cholate per subunit. The polypeptide is Fatty acid-binding protein, liver (FABP1) (Gallus gallus (Chicken)).